A 783-amino-acid chain; its full sequence is Protein involved in starch initiation 1 (783 aa).

Residues 1–27 constitute a chloroplast transit peptide; the sequence is MGFSQAIRLNLASFSSPSPCDYCLTRV. 3 coiled-coil regions span residues 128 to 309, 345 to 432, and 457 to 512; these read LHDA…LKEE, LVFS…LELA, and LQEK…LKAL.

Interacts with PTST2; the interaction is essential for the initiation of starch granules biosynthesis in leaf chloroplasts. Interacts with SS4; the interaction is essential for the initiation of starch granules biosynthesis in leaf chloroplasts.

It is found in the plastid. The protein localises to the chloroplast. In terms of biological role, required for the initiation of starch granules biosynthesis in leaf chloroplasts. Involved in determining starch granule number and size in chloroplasts. This Arabidopsis thaliana (Mouse-ear cress) protein is Protein involved in starch initiation 1.